The primary structure comprises 393 residues: uncharacterized protein (393 aa).

This is an uncharacterized protein from Treponema pallidum (strain Nichols).